Consider the following 260-residue polypeptide: Phosphate import ATP-binding protein PstB (260 aa).

Residues 14–255 form the ABC transporter domain; the sequence is IETENLNLFY…PKNTKTEEYI (242 aa). 46 to 53 lines the ATP pocket; that stretch reads GPSGCGKS.

The protein belongs to the ABC transporter superfamily. Phosphate importer (TC 3.A.1.7) family. As to quaternary structure, the complex is composed of two ATP-binding proteins (PstB), two transmembrane proteins (PstC and PstA) and a solute-binding protein (PstS).

Its subcellular location is the cell inner membrane. It catalyses the reaction phosphate(out) + ATP + H2O = ADP + 2 phosphate(in) + H(+). In terms of biological role, part of the ABC transporter complex PstSACB involved in phosphate import. Responsible for energy coupling to the transport system. This chain is Phosphate import ATP-binding protein PstB, found in Borreliella afzelii (strain PKo) (Borrelia afzelii).